A 215-amino-acid chain; its full sequence is Cytochrome b6 (215 aa).

Residues 32–52 form a helical membrane-spanning segment; the sequence is VFYCFGGMTLTCFLVQLATGF. Heme c is bound at residue Cys-35. Heme b-binding residues include His-86 and His-100. The next 3 membrane-spanning stretches (helical) occupy residues 90-110, 116-136, and 186-206; these read ASMM…TGGF, LTWI…VTGY, and LHTL…FLMI. 2 residues coordinate heme b: His-187 and His-202.

Belongs to the cytochrome b family. PetB subfamily. As to quaternary structure, the 4 large subunits of the cytochrome b6-f complex are cytochrome b6, subunit IV (17 kDa polypeptide, PetD), cytochrome f and the Rieske protein, while the 4 small subunits are PetG, PetL, PetM and PetN. The complex functions as a dimer. Heme b is required as a cofactor. It depends on heme c as a cofactor.

The protein localises to the plastid. It localises to the chloroplast thylakoid membrane. Its function is as follows. Component of the cytochrome b6-f complex, which mediates electron transfer between photosystem II (PSII) and photosystem I (PSI), cyclic electron flow around PSI, and state transitions. The protein is Cytochrome b6 of Cyanidium caldarium (Red alga).